The following is a 194-amino-acid chain: Early growth response protein 1 (194 aa).

3 C2H2-type zinc fingers span residues 1 to 18, 24 to 46, and 52 to 74; these read CDRR…IRIH, FQCR…IRTH, and FACD…TKIH. The segment at 66–88 is disordered; that stretch reads ERKRHTKIHLRQKDKKVEKAASV. The span at 69 to 79 shows a compositional bias: basic residues; the sequence is RHTKIHLRQKD.

It belongs to the EGR C2H2-type zinc-finger protein family.

The protein localises to the nucleus. The protein resides in the cytoplasm. In terms of biological role, transcriptional regulator. Recognizes and binds to the DNA sequence 5'-GCG(T/G)GGGCG-3'(EGR-site) in the promoter region of target genes. Binds double-stranded target DNA, irrespective of the cytosine methylation status. Regulates the transcription of numerous target genes, and thereby plays an important role in regulating the response to growth factors, DNA damage, and ischemia. Plays a role in the regulation of cell survival, proliferation and cell death. Mediates responses to ischemia and hypoxia; regulates the expression of proteins that are involved in inflammatory processes. Plays a role in regulating the expression of circadian clock genes. The polypeptide is Early growth response protein 1 (EGR1) (Coturnix japonica (Japanese quail)).